Here is a 251-residue protein sequence, read N- to C-terminus: Uridylate kinase (251 aa).

24–27 contacts ATP; sequence KISG. The tract at residues 32–37 is involved in allosteric activation by GTP; the sequence is GDQGFG. Position 66 (G66) interacts with UMP. ATP is bound by residues G67 and R71. Residues D86 and 147–154 each bind UMP; that span reads TGNPYFTT. Positions 175, 181, and 184 each coordinate ATP.

Belongs to the UMP kinase family. Homohexamer.

The protein resides in the cytoplasm. It catalyses the reaction UMP + ATP = UDP + ADP. It functions in the pathway pyrimidine metabolism; CTP biosynthesis via de novo pathway; UDP from UMP (UMPK route): step 1/1. Allosterically activated by GTP. Inhibited by UTP. Catalyzes the reversible phosphorylation of UMP to UDP. This is Uridylate kinase from Ruegeria pomeroyi (strain ATCC 700808 / DSM 15171 / DSS-3) (Silicibacter pomeroyi).